The sequence spans 121 residues: Small ribosomal subunit protein uS10 (121 aa).

Ser-2 carries the post-translational modification N-acetylserine. Glycyl lysine isopeptide (Lys-Gly) (interchain with G-Cter in ubiquitin) cross-links involve residues Lys-6, Lys-8, Lys-21, Lys-32, and Lys-101.

It belongs to the universal ribosomal protein uS10 family. In terms of assembly, component of the small ribosomal subunit (SSU). Mature yeast ribosomes consist of a small (40S) and a large (60S) subunit. The 40S small subunit contains 1 molecule of ribosomal RNA (18S rRNA) and 33 different proteins (encoded by 57 genes). The large 60S subunit contains 3 rRNA molecules (25S, 5.8S and 5S rRNA) and 46 different proteins (encoded by 81 genes). In terms of processing, ubiquitinated at Lys-6 and Lys-8 by HEL2, to activate the ribosome quality control (RQC) pathway in response to stalled ribosomes. Post-translationally, N-terminally acetylated by acetyltransferase NatA. Also partially acetylated by NatC.

It localises to the cytoplasm. Functionally, component of the ribosome, a large ribonucleoprotein complex responsible for the synthesis of proteins in the cell. The small ribosomal subunit (SSU) binds messenger RNAs (mRNAs) and translates the encoded message by selecting cognate aminoacyl-transfer RNA (tRNA) molecules. The large subunit (LSU) contains the ribosomal catalytic site termed the peptidyl transferase center (PTC), which catalyzes the formation of peptide bonds, thereby polymerizing the amino acids delivered by tRNAs into a polypeptide chain. The nascent polypeptides leave the ribosome through a tunnel in the LSU and interact with protein factors that function in enzymatic processing, targeting, and the membrane insertion of nascent chains at the exit of the ribosomal tunnel. The sequence is that of Small ribosomal subunit protein uS10 from Saccharomyces cerevisiae (strain ATCC 204508 / S288c) (Baker's yeast).